The primary structure comprises 402 residues: Speedy protein E5 (402 aa).

Residues 1 to 89 (MDRTETRFRK…EEPEKELAPE (89 aa)) form a disordered region. Polar residues predominate over residues 16–39 (EKITTSRQPQPQNEQSPQRSTSGY). Residues 76–89 (DESAEEPEKELAPE) show a composition bias toward acidic residues.

This sequence belongs to the Speedy/Ringo family.

In Homo sapiens (Human), this protein is Speedy protein E5 (SPDYE5).